A 772-amino-acid chain; its full sequence is 5-methyltetrahydropteroyltriglutamate--homocysteine methyltransferase (772 aa).

5-methyltetrahydropteroyltri-L-glutamate is bound by residues 24-27 (RELK) and K120. The segment at 404–428 (DPAVRSRTAATTDADARRSGPYPER) is disordered. L-homocysteine contacts are provided by residues 446–448 (IGS) and E499. L-methionine is bound by residues 446 to 448 (IGS) and E499. W576 provides a ligand contact to 5-methyltetrahydropteroyltri-L-glutamate. An L-homocysteine-binding site is contributed by D614. L-methionine is bound at residue D614. E620 provides a ligand contact to 5-methyltetrahydropteroyltri-L-glutamate. H656, C658, and E680 together coordinate Zn(2+). Residue H709 is the Proton donor of the active site. C741 serves as a coordination point for Zn(2+).

Belongs to the vitamin-B12 independent methionine synthase family. Zn(2+) is required as a cofactor.

The enzyme catalyses 5-methyltetrahydropteroyltri-L-glutamate + L-homocysteine = tetrahydropteroyltri-L-glutamate + L-methionine. It functions in the pathway amino-acid biosynthesis; L-methionine biosynthesis via de novo pathway; L-methionine from L-homocysteine (MetE route): step 1/1. Its function is as follows. Catalyzes the transfer of a methyl group from 5-methyltetrahydrofolate to homocysteine resulting in methionine formation. This chain is 5-methyltetrahydropteroyltriglutamate--homocysteine methyltransferase, found in Streptomyces avermitilis (strain ATCC 31267 / DSM 46492 / JCM 5070 / NBRC 14893 / NCIMB 12804 / NRRL 8165 / MA-4680).